The chain runs to 462 residues: Glycine--tRNA ligase (462 aa).

2 residues coordinate substrate: Arg-100 and Glu-170. Residues 202–204 (RNE), 212–217 (FRTREF), 287–288 (EL), and 331–334 (GVER) contribute to the ATP site. 217–221 (FEQME) provides a ligand contact to substrate. 327 to 331 (EPSVG) is a binding site for substrate.

It belongs to the class-II aminoacyl-tRNA synthetase family. As to quaternary structure, homodimer.

It localises to the cytoplasm. The enzyme catalyses tRNA(Gly) + glycine + ATP = glycyl-tRNA(Gly) + AMP + diphosphate. Functionally, catalyzes the attachment of glycine to tRNA(Gly). This chain is Glycine--tRNA ligase, found in Malacoplasma penetrans (strain HF-2) (Mycoplasma penetrans).